A 369-amino-acid polypeptide reads, in one-letter code: Anhydro-N-acetylmuramic acid kinase (369 aa).

Residue 12-19 (GTSLDGVD) coordinates ATP.

It belongs to the anhydro-N-acetylmuramic acid kinase family.

It catalyses the reaction 1,6-anhydro-N-acetyl-beta-muramate + ATP + H2O = N-acetyl-D-muramate 6-phosphate + ADP + H(+). Its pathway is amino-sugar metabolism; 1,6-anhydro-N-acetylmuramate degradation. It functions in the pathway cell wall biogenesis; peptidoglycan recycling. Functionally, catalyzes the specific phosphorylation of 1,6-anhydro-N-acetylmuramic acid (anhMurNAc) with the simultaneous cleavage of the 1,6-anhydro ring, generating MurNAc-6-P. Is required for the utilization of anhMurNAc either imported from the medium or derived from its own cell wall murein, and thus plays a role in cell wall recycling. In Escherichia coli O157:H7, this protein is Anhydro-N-acetylmuramic acid kinase.